Consider the following 555-residue polypeptide: Urocanate hydratase (555 aa).

NAD(+)-binding positions include 52-53, glutamine 130, 176-178, glutamate 196, arginine 201, 242-243, 263-267, 273-274, and tyrosine 322; these read GG, GMG, NA, QTSAH, and YL. Cysteine 410 is an active-site residue. NAD(+) is bound at residue glycine 492.

Belongs to the urocanase family. The cofactor is NAD(+).

The protein resides in the cytoplasm. It catalyses the reaction 4-imidazolone-5-propanoate = trans-urocanate + H2O. The protein operates within amino-acid degradation; L-histidine degradation into L-glutamate; N-formimidoyl-L-glutamate from L-histidine: step 2/3. Catalyzes the conversion of urocanate to 4-imidazolone-5-propionate. This Shewanella baltica (strain OS185) protein is Urocanate hydratase.